The chain runs to 1038 residues: MKNNLRYGIRKHKLGAASVFLGTMIVVGMGQDKEAAASEQKTTTVEENGNSATDNKTSETQTTATNVNHIEETQSYNATVTEQPSNATQVTTEEAPKAVQAPQTAQPANVETVKEEEKPQVKETTQPQDNSGNQRQVDLTPKKVTQNQGTETQVEVAQPRTASESKPRVTRSADVAEAKEASDVSEVKGTDVTSKVTVESGSIEAPQGNKVEPHAGQRVVLKYKLKFADGLKRGDYFDFTLSNNVNTYGVSTARKVPEIKNGSVVMATGEILGNGNIRYTFTNEIEHKVEVTANLEINLFIDPKTVQSNGEQKITSKLNGEETEKTIPVVYNPGVSNSYTNVNGSIETFNKESNKFTHIAYIKPMNGNQSNTVSVTGTLTEGSNLAGGQPTVKVYEYLGKKDELPQSVYANTSDTNKFKDVTKEMNGKLSVQDNGSYSLNLDKLDKTYVIHYTGEYLQGSDQVNFRTELYGYPERAYKSYYVYGGYRLTWDNGLVLYSNKADGNGKNGQIIQDNDFEYKEDTAKGTMSGQYDAKQIIETEENQDNTPLDIDYHTAIDGEGGYVDGYIETIEETDSSAIDIDYHTAVDSEVGHVGGYTESSEESNPIDFEESTHENSKHHADVVEYEEDTNPGGGQVTTESNLVEFDEESTKGIVTGAVSDHTTIEDTKEYTTESNLIELVDELPEEHGQAQGPIEEITENNHHISHSGLGTENGHGNYGVIEEIEENSHVDIKSELGYEGGQNSGNQSFEEDTEEDKPKYEQGGNIVDIDFDSVPQIHGQNKGDQSFEEDTEKDKPKYEHGGNIIDIDFDSVPQIHGFNKHNEIIEEDTNKDKPNYQFGGHNSVDFEEDTLPKVSGQNEGQQTIEEDTTPPTPPTPEVPSEPETPMPPTPEVPSEPETPTPPTPEVPSEPETPTPPTPEVPSEPETPTPPTPEVPSEPETPTPPTPEVPAEPGKPVPPAKEEPKKPSKPVEQGKVVTPVIEINEKVKAVAPTKKAQSKKSELPETGGEESTNKGMLFGGLFSILGLALLRRNKKNNKA.

The first 36 residues, methionine 1–alanine 36, serve as a signal peptide directing secretion. Residues tyrosine 7 to serine 18 carry the YSIRK-G/S signaling motif motif. A disordered region spans residues alanine 37–threonine 193. A ligand-binding A region region spans residues alanine 37–asparagine 507. Residues glutamate 39–threonine 92 are compositionally biased toward polar residues. A compositionally biased stretch (basic and acidic residues) spans threonine 112–valine 121. Residues lysine 122 to glutamate 164 show a composition bias toward polar residues. Basic and acidic residues predominate over residues aspartate 174–glycine 189. The segment at glycine 189–asparagine 507 is fibrinogen/elastin/tropoelastin-binding. The tract at residues glycine 508–threonine 868 is fibronectin-binding. The B-1 repeat unit spans residues glutamate 541–isoleucine 570. The interval glutamate 541–serine 600 is 2 X approximate tandem repeats. The B-2 repeat unit spans residues glutamate 571–serine 600. Disordered stretches follow at residues leucine 736–isoleucine 804, isoleucine 825–valine 976, and valine 989–methionine 1015. Residues glycine 741–histidine 778 form a D-1 repeat. Residues glycine 741–threonine 898 form a 4 X approximate tandem repeats region. Residues glycine 779–histidine 816 form a D-2 repeat. A D-3 repeat occupies glycine 817–serine 855. Over residues isoleucine 825–proline 834 the composition is skewed to basic and acidic residues. Residues glycine 856 to threonine 898 form a D-4 repeat. A compositionally biased stretch (pro residues) spans proline 870–proline 958. WR repeat units follow at residues proline 899–threonine 912, proline 913–threonine 926, proline 927–threonine 940, proline 941–lysine 954, and proline 955–lysine 968. The segment at proline 899–lysine 968 is 5 X tandem repeats, Pro-rich (WR). The LPXTG sorting signal signature appears at leucine 1002–glycine 1006. The residue at position 1005 (threonine 1005) is a Pentaglycyl murein peptidoglycan amidated threonine. A propeptide spans glycine 1006 to alanine 1038 (removed by sortase).

The protein resides in the secreted. It localises to the cell wall. Functionally, promotes bacterial attachment to multiple substrates, such as fibronectin (Fn), fibrinogen (Fg), elastin peptides and tropoelastin. This confers to S.aureus the ability to invade endothelial cells. Promotes adherence to and aggregation of activated platelets. This Staphylococcus aureus (strain Mu50 / ATCC 700699) protein is Fibronectin-binding protein A (fnbA).